Reading from the N-terminus, the 243-residue chain is MKAKLIAATEIDPGALRDIGFEVDDFEESKDEDPYFGDFDADELAEFAGRNCYRSFHRPNPATAENEDYLNHIIDLGHESVFEHASATFYIEASRSVLTELERHRHLSFSVVSQRYVDPTDLGIHLPPALFKLHPDDRDDLVHIMESVSSEIDAVYEHIVNRLADRGLPRKQAREAARAVLPNMTNSPMVVTGNHRAWRYVIKARWHEAADAEIRELAGELLRQLRQIAPNTYQDIPDVPYSY.

In terms of domain architecture, ThyX spans Phe-21–Val-239. FAD-binding positions include Ser-80 and Arg-103 to Arg-105. Residues Glu-100–Arg-103, Ser-113–Arg-115, and Arg-178 each bind dUMP. The ThyX motif signature appears at Arg-103 to Ser-113. An FAD-binding site is contributed by Asn-194–Arg-196. Arg-205 provides a ligand contact to dUMP. The active-site Involved in ionization of N3 of dUMP, leading to its activation is Arg-205.

The protein belongs to the thymidylate synthase ThyX family. Homotetramer. Requires FAD as cofactor.

The catalysed reaction is dUMP + (6R)-5,10-methylene-5,6,7,8-tetrahydrofolate + NADPH + H(+) = dTMP + (6S)-5,6,7,8-tetrahydrofolate + NADP(+). Its pathway is pyrimidine metabolism; dTTP biosynthesis. Functionally, catalyzes the reductive methylation of 2'-deoxyuridine-5'-monophosphate (dUMP) to 2'-deoxythymidine-5'-monophosphate (dTMP) while utilizing 5,10-methylenetetrahydrofolate (mTHF) as the methyl donor, and NADPH and FADH(2) as the reductant. In Mycobacterium phage L5 (Mycobacteriophage L5), this protein is Probable flavin-dependent thymidylate synthase (48).